Here is a 188-residue protein sequence, read N- to C-terminus: Putative nucleotidase OB0422 (188 aa).

Belongs to the 5'(3')-deoxyribonucleotidase family.

This is Putative nucleotidase OB0422 from Oceanobacillus iheyensis (strain DSM 14371 / CIP 107618 / JCM 11309 / KCTC 3954 / HTE831).